A 429-amino-acid chain; its full sequence is Phosphoribosylamine--glycine ligase (429 aa).

Positions 109–316 constitute an ATP-grasp domain; the sequence is KDFLARHQIP…LVDLCLAACD (208 aa). 135–196 is a binding site for ATP; sequence LREKGAPIVI…EEFLDGEEAS (62 aa). Mg(2+)-binding residues include E286 and N288.

This sequence belongs to the GARS family. In terms of assembly, monomer. It depends on Mg(2+) as a cofactor. Mn(2+) serves as cofactor.

The catalysed reaction is 5-phospho-beta-D-ribosylamine + glycine + ATP = N(1)-(5-phospho-beta-D-ribosyl)glycinamide + ADP + phosphate + H(+). The protein operates within purine metabolism; IMP biosynthesis via de novo pathway; N(1)-(5-phospho-D-ribosyl)glycinamide from 5-phospho-alpha-D-ribose 1-diphosphate: step 2/2. This is Phosphoribosylamine--glycine ligase from Salmonella typhi.